We begin with the raw amino-acid sequence, 350 residues long: Dihydroorotase (350 aa).

2 residues coordinate Zn(2+): His13 and His15. Substrate-binding positions include 15–17 and Asn41; that span reads HLR. Lys99, His136, and His174 together coordinate Zn(2+). Lys99 is subject to N6-carboxylysine. His136 provides a ligand contact to substrate. Leu219 contributes to the substrate binding site. Asp247 contacts Zn(2+). Residue Asp247 is part of the active site. The substrate site is built by His251 and Ala263.

Belongs to the metallo-dependent hydrolases superfamily. DHOase family. Class II DHOase subfamily. As to quaternary structure, homodimer. Zn(2+) serves as cofactor.

The catalysed reaction is (S)-dihydroorotate + H2O = N-carbamoyl-L-aspartate + H(+). The protein operates within pyrimidine metabolism; UMP biosynthesis via de novo pathway; (S)-dihydroorotate from bicarbonate: step 3/3. Its function is as follows. Catalyzes the reversible cyclization of carbamoyl aspartate to dihydroorotate. The chain is Dihydroorotase from Allorhizobium ampelinum (strain ATCC BAA-846 / DSM 112012 / S4) (Agrobacterium vitis (strain S4)).